The primary structure comprises 475 residues: Putative histidine permease (475 aa).

12 helical membrane-spanning segments follow: residues 20-40, 44-64, 87-107, 127-147, 162-182, 199-219, 246-266, 277-297, 341-361, 363-383, 410-430, and 434-454; these read LFMI…TGYT, AGPG…YLVM, FIGP…WVVT, SVWM…AFSV, IVTI…LISL, GLFP…SFAF, VAWR…GLIS, FVAV…NFVI, ALMI…VAPG, VYVV…MSIA, YPLM…GLAF, and QRIA…IYHF.

It belongs to the amino acid-polyamine-organocation (APC) superfamily.

It is found in the cell membrane. This chain is Putative histidine permease (hutM), found in Bacillus subtilis (strain 168).